The following is a 231-amino-acid chain: 7-cyano-7-deazaguanine synthase (231 aa).

8–18 (FSGGQDSTTCL) lines the ATP pocket. Positions 188, 197, 200, and 203 each coordinate Zn(2+).

Belongs to the QueC family. The cofactor is Zn(2+).

The catalysed reaction is 7-carboxy-7-deazaguanine + NH4(+) + ATP = 7-cyano-7-deazaguanine + ADP + phosphate + H2O + H(+). The protein operates within purine metabolism; 7-cyano-7-deazaguanine biosynthesis. Functionally, catalyzes the ATP-dependent conversion of 7-carboxy-7-deazaguanine (CDG) to 7-cyano-7-deazaguanine (preQ(0)). The protein is 7-cyano-7-deazaguanine synthase of Salmonella paratyphi A (strain ATCC 9150 / SARB42).